A 188-amino-acid polypeptide reads, in one-letter code: Protease-associated domain-containing protein 1 (188 aa).

A signal peptide spans 1–21 (MSRGAAGWCCLVLWLPTCVAA). In terms of domain architecture, PA spans 83–163 (IQDQIALVER…RSLEQHGLPW (81 aa)). N-linked (GlcNAc...) asparagine glycosylation is found at asparagine 121 and asparagine 171.

Post-translationally, N-glycosylated; required for efficient secretion. Expressed in metabolically active tissues such as liver, muscle, adipose, and heart and different brain regions like cortex and hypothalamus, expression is acutely regulated by the nutritional state.

The protein localises to the secreted. Its function is as follows. Plays a role in the modulation of physical activity and adiposity. The protein is Protease-associated domain-containing protein 1 of Mus musculus (Mouse).